A 666-amino-acid polypeptide reads, in one-letter code: uncharacterized protein (666 aa).

This sequence belongs to the MG032/MG096/MG288 family.

This is an uncharacterized protein from Mycoplasma pneumoniae (strain ATCC 29342 / M129 / Subtype 1) (Mycoplasmoides pneumoniae).